We begin with the raw amino-acid sequence, 620 residues long: 1-deoxy-D-xylulose-5-phosphate synthase (620 aa).

Thiamine diphosphate contacts are provided by residues H80 and 121-123; that span reads GHS. Mg(2+) is bound at residue D152. Residues 153–154, N181, Y288, and E370 each bind thiamine diphosphate; that span reads GA. Position 181 (N181) interacts with Mg(2+).

This sequence belongs to the transketolase family. DXPS subfamily. In terms of assembly, homodimer. It depends on Mg(2+) as a cofactor. The cofactor is thiamine diphosphate.

The enzyme catalyses D-glyceraldehyde 3-phosphate + pyruvate + H(+) = 1-deoxy-D-xylulose 5-phosphate + CO2. The protein operates within metabolic intermediate biosynthesis; 1-deoxy-D-xylulose 5-phosphate biosynthesis; 1-deoxy-D-xylulose 5-phosphate from D-glyceraldehyde 3-phosphate and pyruvate: step 1/1. Functionally, catalyzes the acyloin condensation reaction between C atoms 2 and 3 of pyruvate and glyceraldehyde 3-phosphate to yield 1-deoxy-D-xylulose-5-phosphate (DXP). This is 1-deoxy-D-xylulose-5-phosphate synthase from Shigella boydii serotype 18 (strain CDC 3083-94 / BS512).